Here is a 396-residue protein sequence, read N- to C-terminus: Tryptophan synthase beta chain (396 aa).

An N6-(pyridoxal phosphate)lysine modification is found at Lys88.

The protein belongs to the TrpB family. Tetramer of two alpha and two beta chains. The cofactor is pyridoxal 5'-phosphate.

The catalysed reaction is (1S,2R)-1-C-(indol-3-yl)glycerol 3-phosphate + L-serine = D-glyceraldehyde 3-phosphate + L-tryptophan + H2O. It participates in amino-acid biosynthesis; L-tryptophan biosynthesis; L-tryptophan from chorismate: step 5/5. Its function is as follows. The beta subunit is responsible for the synthesis of L-tryptophan from indole and L-serine. The polypeptide is Tryptophan synthase beta chain (Shewanella oneidensis (strain ATCC 700550 / JCM 31522 / CIP 106686 / LMG 19005 / NCIMB 14063 / MR-1)).